A 74-amino-acid chain; its full sequence is Protein kish-B (74 aa).

An N-terminal signal peptide occupies residues Met-1–Ala-22. Residues Tyr-23 to Gly-52 lie on the Extracellular side of the membrane. The chain crosses the membrane as a helical span at residues Thr-53–Leu-73. A topological domain (cytoplasmic) is located at residue Lys-74.

The protein belongs to the KISH family.

It localises to the golgi apparatus membrane. In terms of biological role, involved in the early part of the secretory pathway. This Danio rerio (Zebrafish) protein is Protein kish-B (tmem167b).